Here is a 551-residue protein sequence, read N- to C-terminus: MNRRRFIKGSMAMAAVCGSSGIASLFSQAAFAAESDIADGKIVRFDFAGLQSMAQALAKKPWGGAPGPLPDTLANLTPQAYNSIQYDAAHSLWNGVANRQLDIQFFHVGMGFRRRVRMFSVDTTTHLAREIHFRPELFKYNDAGVDTTQLEGQSDLGFAGFRVFKAPELARRDVVSFLGASYFRAVDDTYQYGLSARGLAIDTYTDGQEEFPDFTAFWFDTAKPGDTTFTVYALLDSASVTGAYKFVIHCEKTQVIMDVENHLYARKDIKQLGIAPMTSMFSCGNNERRVCDTIHPQIHDSDRLAMWRGNGEWICRPLNNPQKLQFNAYMDDNPKGFGLLQLDRDFSHYQDVMDWYNKRPSLWVEPRSKWGKGAVSLMEIPTTGETLDNVVCFWQPEKAIKAGDTLVFNYRLYWSAQPPVQSPLARVMATRTGMGGFPEGWAPGEHYPDKWARRFAIDFVGGDLKAAAPKSIEPVITLSSGEAKQVEILYVEPFDGYRIQFDWYPTSDSTAPVDMRMFLRCQGEAISETWLYQYFPPAPDKRRYVDDRIMR.

Residues 1 to 32 (MNRRRFIKGSMAMAAVCGSSGIASLFSQAAFA) constitute a signal peptide (tat-type signal).

The protein belongs to the OpgD/OpgG family. Post-translationally, predicted to be exported by the Tat system. The position of the signal peptide cleavage has not been experimentally proven.

The protein localises to the periplasm. It functions in the pathway glycan metabolism; osmoregulated periplasmic glucan (OPG) biosynthesis. Probably involved in the control of the structural glucose backbone of osmoregulated periplasmic glucans (OPGs). The chain is Glucans biosynthesis protein D from Salmonella paratyphi A (strain ATCC 9150 / SARB42).